We begin with the raw amino-acid sequence, 228 residues long: uncharacterized protein (228 aa).

2 disordered regions span residues 1-62 and 160-228; these read MQRP…VGRF and SPRP…LSGV. The span at 13-33 shows a compositional bias: low complexity; the sequence is AASTRAPPRPSAPQQGRRQPS. A compositionally biased stretch (polar residues) spans 167 to 176; sequence RGQQVTQDGP.

This is an uncharacterized protein from Homo sapiens (Human).